Consider the following 171-residue polypeptide: 3-hydroxydecanoyl-[acyl-carrier-protein] dehydratase (171 aa).

Residue histidine 70 is part of the active site.

The protein belongs to the thioester dehydratase family. FabA subfamily. Homodimer.

It is found in the cytoplasm. It catalyses the reaction a (3R)-hydroxyacyl-[ACP] = a (2E)-enoyl-[ACP] + H2O. It carries out the reaction (3R)-hydroxydecanoyl-[ACP] = (2E)-decenoyl-[ACP] + H2O. The enzyme catalyses (2E)-decenoyl-[ACP] = (3Z)-decenoyl-[ACP]. It participates in lipid metabolism; fatty acid biosynthesis. Necessary for the introduction of cis unsaturation into fatty acids. Catalyzes the dehydration of (3R)-3-hydroxydecanoyl-ACP to E-(2)-decenoyl-ACP and then its isomerization to Z-(3)-decenoyl-ACP. Can catalyze the dehydratase reaction for beta-hydroxyacyl-ACPs with saturated chain lengths up to 16:0, being most active on intermediate chain length. The chain is 3-hydroxydecanoyl-[acyl-carrier-protein] dehydratase from Shewanella denitrificans (strain OS217 / ATCC BAA-1090 / DSM 15013).